Reading from the N-terminus, the 721-residue chain is Polyribonucleotide nucleotidyltransferase (721 aa).

Positions 495 and 501 each coordinate Mg(2+). Residues 562-621 (PRITTIKIRPERIKDIIGPGGKTIKDITARTGTSINIEDDGSVSIASPNQDKVEEAIKMI) form the KH domain. The S1 motif domain occupies 631 to 699 (GRIYLGTVRK…RSGKIRLSRK (69 aa)). The interval 699-721 (KEALADSAKKSEGTEPPKGEPAK) is disordered.

Belongs to the polyribonucleotide nucleotidyltransferase family. The cofactor is Mg(2+).

The protein resides in the cytoplasm. It carries out the reaction RNA(n+1) + phosphate = RNA(n) + a ribonucleoside 5'-diphosphate. In terms of biological role, involved in mRNA degradation. Catalyzes the phosphorolysis of single-stranded polyribonucleotides processively in the 3'- to 5'-direction. The protein is Polyribonucleotide nucleotidyltransferase of Anaeromyxobacter sp. (strain K).